The chain runs to 525 residues: ATP synthase subunit alpha (525 aa).

171–178 (GDRQTGKS) provides a ligand contact to ATP.

The protein belongs to the ATPase alpha/beta chains family. F-type ATPases have 2 components, CF(1) - the catalytic core - and CF(0) - the membrane proton channel. CF(1) has five subunits: alpha(3), beta(3), gamma(1), delta(1), epsilon(1). CF(0) has three main subunits: a(1), b(2) and c(9-12). The alpha and beta chains form an alternating ring which encloses part of the gamma chain. CF(1) is attached to CF(0) by a central stalk formed by the gamma and epsilon chains, while a peripheral stalk is formed by the delta and b chains.

It is found in the cell inner membrane. The enzyme catalyses ATP + H2O + 4 H(+)(in) = ADP + phosphate + 5 H(+)(out). Functionally, produces ATP from ADP in the presence of a proton gradient across the membrane. The alpha chain is a regulatory subunit. The sequence is that of ATP synthase subunit alpha from Flavobacterium psychrophilum (strain ATCC 49511 / DSM 21280 / CIP 103535 / JIP02/86).